Here is a 484-residue protein sequence, read N- to C-terminus: tRNA nucleotidyltransferase cca2 (484 aa).

The short motif at 122–124 (RAE) is the B/A element element. Positions 125 to 142 (SYDDKSRIPSVTPGTVET) are flexible loop. The short motif at 234–244 (ERVGEEIEKML) is the ERhxxExxxhh motif element.

It belongs to the tRNA nucleotidyltransferase/poly(A) polymerase family.

The protein resides in the cytoplasm. The enzyme catalyses a tRNA with a 3' CC end + ATP = a tRNA with a 3' CCA end + diphosphate. Functionally, tRNA nucleotidyltransferase involved in the synthesis of the tRNA CCA terminus. In contrast to what is usually observed in eukaryotes for which one enzyme synthesizes the whole tRNA CCA terminus, in S.pombe, cca1 specifically adds two cytidine residues to a tRNA substrate lacking this sequence while cca2 specifically adds the terminal adenosine residue thereby completing the CCA sequence. The polypeptide is tRNA nucleotidyltransferase cca2 (Schizosaccharomyces pombe (strain 972 / ATCC 24843) (Fission yeast)).